The sequence spans 961 residues: Endochitinase A (961 aa).

Positions 1–21 are cleaved as a signal peptide; the sequence is MAPKLFTFVSALSGLASLASA. The GH18 domain occupies 28-339; sequence SNIAVYYGQG…EKIREILYDL (312 aa). Glutamate 175 functions as the Proton donor in the catalytic mechanism. Disordered regions lie at residues 338–720, 767–787, 813–842, and 912–933; these read DLDP…TTTE, TDVP…TADI, PPAT…GEVS, and HVPV…ASPT. Pro residues predominate over residues 342–355; sequence NHPPPTTSPTPTPT. Composition is skewed to low complexity over residues 356–510, 519–544, 552–604, and 612–635; these read PSTT…STSS, SSTS…PVIS, TSSS…PETT, and TPGS…PATS. The span at 636–665 shows a compositional bias: polar residues; it reads GGHTETSTVSTSSANQTPSASTSKPLIPTN. Positions 666–720 are enriched in low complexity; it reads SASSTSTGSVTSTPSAPGVPSSSAGSDETATTSTTDSEPTSTSSGSVTAKPTTTE. Residue glycine 936 is the site of GPI-anchor amidated glycine attachment. A propeptide spans 937–961 (removed in mature form); the sequence is AGSRYDVVKGVPALVALALSLLAVL.

It belongs to the glycosyl hydrolase 18 family. Chitinase class III subfamily. In terms of processing, O-glycosylated but not N-glycosylated.

It localises to the cell membrane. Its subcellular location is the secreted. The protein localises to the cell wall. The protein resides in the cell tip. It catalyses the reaction Random endo-hydrolysis of N-acetyl-beta-D-glucosaminide (1-&gt;4)-beta-linkages in chitin and chitodextrins.. In terms of biological role, GPI-anchored chitinase involved in the degradation of chitin, a component of the cell walls of fungi and exoskeletal elements of some animals (including worms and arthropods). Required to reshape the cell wall at the sites where cell wall remodeling and/or cell wall maturation actively take place such as sites of conidia formation. The protein is Endochitinase A (chiA) of Emericella nidulans (Aspergillus nidulans).